A 178-amino-acid chain; its full sequence is Ribosome maturation factor RimP (178 aa).

Belongs to the RimP family.

It is found in the cytoplasm. Its function is as follows. Required for maturation of 30S ribosomal subunits. The chain is Ribosome maturation factor RimP from Streptococcus pyogenes serotype M3 (strain ATCC BAA-595 / MGAS315).